We begin with the raw amino-acid sequence, 125 residues long: Small ribosomal subunit protein eS25 (125 aa).

The segment covering 1–23 (MPPKDDKKKKDAGKSAKKDKDPV) has biased composition (basic and acidic residues). A disordered region spans residues 1–38 (MPPKDDKKKKDAGKSAKKDKDPVNKSGGKAKKKKWSKG). Over residues 28 to 38 (GKAKKKKWSKG) the composition is skewed to basic residues. Position 43 is an N6-acetyllysine (K43). The residue at position 52 (K52) is an N6-acetyllysine; alternate. K52 bears the N6-succinyllysine; alternate mark. 2 positions are modified to N6-acetyllysine: K60 and K66. K94 is subject to N6-acetyllysine; alternate. K94 is modified (N6-succinyllysine; alternate).

This sequence belongs to the eukaryotic ribosomal protein eS25 family. Component of the small ribosomal subunit.

It is found in the cytoplasm. Its function is as follows. Component of the small ribosomal subunit. The ribosome is a large ribonucleoprotein complex responsible for the synthesis of proteins in the cell. This chain is Small ribosomal subunit protein eS25 (RPS25), found in Homo sapiens (Human).